A 156-amino-acid chain; its full sequence is SsrA-binding protein (156 aa).

The segment at 134-156 (YDKRETLKRKEQDREMARALRKR) is disordered.

This sequence belongs to the SmpB family.

The protein resides in the cytoplasm. Functionally, required for rescue of stalled ribosomes mediated by trans-translation. Binds to transfer-messenger RNA (tmRNA), required for stable association of tmRNA with ribosomes. tmRNA and SmpB together mimic tRNA shape, replacing the anticodon stem-loop with SmpB. tmRNA is encoded by the ssrA gene; the 2 termini fold to resemble tRNA(Ala) and it encodes a 'tag peptide', a short internal open reading frame. During trans-translation Ala-aminoacylated tmRNA acts like a tRNA, entering the A-site of stalled ribosomes, displacing the stalled mRNA. The ribosome then switches to translate the ORF on the tmRNA; the nascent peptide is terminated with the 'tag peptide' encoded by the tmRNA and targeted for degradation. The ribosome is freed to recommence translation, which seems to be the essential function of trans-translation. The sequence is that of SsrA-binding protein from Latilactobacillus sakei subsp. sakei (strain 23K) (Lactobacillus sakei subsp. sakei).